The following is a 398-amino-acid chain: Dual-specificity RNA methyltransferase RlmN (398 aa).

Glutamate 119 serves as the catalytic Proton acceptor. One can recognise a Radical SAM core domain in the interval 125–364 (EADRATLCVS…TIVRKTRGDD (240 aa)). An intrachain disulfide couples cysteine 132 to cysteine 369. Residues cysteine 139, cysteine 143, and cysteine 146 each contribute to the [4Fe-4S] cluster site. S-adenosyl-L-methionine is bound by residues 193-194 (GE), serine 225, 247-249 (SLH), and asparagine 326. Cysteine 369 functions as the S-methylcysteine intermediate in the catalytic mechanism.

This sequence belongs to the radical SAM superfamily. RlmN family. [4Fe-4S] cluster is required as a cofactor.

Its subcellular location is the cytoplasm. The enzyme catalyses adenosine(2503) in 23S rRNA + 2 reduced [2Fe-2S]-[ferredoxin] + 2 S-adenosyl-L-methionine = 2-methyladenosine(2503) in 23S rRNA + 5'-deoxyadenosine + L-methionine + 2 oxidized [2Fe-2S]-[ferredoxin] + S-adenosyl-L-homocysteine. It catalyses the reaction adenosine(37) in tRNA + 2 reduced [2Fe-2S]-[ferredoxin] + 2 S-adenosyl-L-methionine = 2-methyladenosine(37) in tRNA + 5'-deoxyadenosine + L-methionine + 2 oxidized [2Fe-2S]-[ferredoxin] + S-adenosyl-L-homocysteine. Its function is as follows. Specifically methylates position 2 of adenine 2503 in 23S rRNA and position 2 of adenine 37 in tRNAs. m2A2503 modification seems to play a crucial role in the proofreading step occurring at the peptidyl transferase center and thus would serve to optimize ribosomal fidelity. The chain is Dual-specificity RNA methyltransferase RlmN from Yersinia pseudotuberculosis serotype O:3 (strain YPIII).